The following is a 412-amino-acid chain: MKIYRVGGSVRDELLGLPVKDQDYVVVGATPEDMIRQGYRPVGKDFPVFLHPETHEQYALARTERKIARGYKGFAIYATPEVTLQEDLARRDLTINAIARDEAGNIIDPFGGIADLQAGILRHIGPAFVEDPVRVLRVARFAARFGFQVAPETFELMKEIVHTGETEALVAERVWQEIAHGLMEQHPSRMFHVLRECRALARILPEVDALFGVPQPAHAHPEIDTGIHVMMVIDYAASQQYPLEVRFAGLTHDLGKGTTPPDEWPRHIGHEARGVELVMDLCERIRVPRESRDLALLVARFHGDVHRALELRPSTIADMLQATDAYRKKVRFQAFLQACASDFHGRPGFADQPYPQAEHLSKALQAANSVDAGAIAMQLGQSHAGDTDLPMRIKRQVYAARVGRIKSLLSNP.

The ATP site is built by G8 and R11. Residues G8 and R11 each contribute to the CTP site. Mg(2+) is bound by residues D21 and D23. Residues R91, R137, and R140 each contribute to the ATP site. CTP-binding residues include R91, R137, and R140. Residues 225-326 enclose the HD domain; it reads TGIHVMMVID…ADMLQATDAY (102 aa).

This sequence belongs to the tRNA nucleotidyltransferase/poly(A) polymerase family. Bacterial CCA-adding enzyme type 1 subfamily. As to quaternary structure, monomer. Can also form homodimers and oligomers. It depends on Mg(2+) as a cofactor. Requires Ni(2+) as cofactor.

The catalysed reaction is a tRNA precursor + 2 CTP + ATP = a tRNA with a 3' CCA end + 3 diphosphate. It catalyses the reaction a tRNA with a 3' CCA end + 2 CTP + ATP = a tRNA with a 3' CCACCA end + 3 diphosphate. In terms of biological role, catalyzes the addition and repair of the essential 3'-terminal CCA sequence in tRNAs without using a nucleic acid template. Adds these three nucleotides in the order of C, C, and A to the tRNA nucleotide-73, using CTP and ATP as substrates and producing inorganic pyrophosphate. tRNA 3'-terminal CCA addition is required both for tRNA processing and repair. Also involved in tRNA surveillance by mediating tandem CCA addition to generate a CCACCA at the 3' terminus of unstable tRNAs. While stable tRNAs receive only 3'-terminal CCA, unstable tRNAs are marked with CCACCA and rapidly degraded. This is Multifunctional CCA protein from Nitrosomonas eutropha (strain DSM 101675 / C91 / Nm57).